A 34-amino-acid polypeptide reads, in one-letter code: Trypsin inhibitor 2 (34 aa).

Residues 1–34 (SGSDGGVCPKILKKCRRDSDCPGACICRGNGYCG) constitute a cross-link (cyclopeptide (Ser-Gly)). A cross-link ((2-aminosuccinimidyl)acetic acid (Asp-Gly); alternate) is located at residues 4–5 (DG). A cross-link (isoaspartyl glycine isopeptide (Asp-Gly); alternate) is located at residues 4–5 (DG). 3 disulfide bridges follow: C8–C25, C15–C27, and C21–C33.

Post-translationally, a cyclic succinimide probably forms by loss of water between Asp-4 and Gly-5, that can then rehydrate to either the original peptide bond or to a beta-aspartyl isopeptide bond. Three isoforms of MCoTI-II are detected, two with the parent molecular weight, corresponding to the unmodified and proposed isopeptide forms, and one with a molecular weight 18 Da lower, corresponding to a succinimide cross-linked form. This is a cyclic peptide.

The protein resides in the secreted. In terms of biological role, inhibits trypsin; probably participates in a plant defense mechanism. In Momordica cochinchinensis (Spiny bitter cucumber), this protein is Trypsin inhibitor 2.